A 355-amino-acid polypeptide reads, in one-letter code: LIM/homeobox protein lim-4 (355 aa).

LIM zinc-binding domains follow at residues 96 to 155 and 166 to 228; these read VICT…THVT and PKCA…LVEG. A DNA-binding region (homeobox) is located at residues 239–298; that stretch reads TKRVRTTFAEDQLSVLQTYFNRDSNPDGADLEKIASMTGLSKRVTQVWFQNSRARQKKWH. The interval 291 to 336 is disordered; that stretch reads RARQKKWHQKSEGDNGDSQRSSVGPSSPSQKSDSSSEMMYPTSVTT. The segment covering 306–326 has biased composition (low complexity); sequence GDSQRSSVGPSSPSQKSDSSS.

As to quaternary structure, interacts with transcription factor sox-2. Expressed in the AWB sensory neurons and in one RME motor neuron (RMEV), two RMD motor neurons (RMDL and RMDR), the RID, RIV, SAA and SIA interneurons and the SMB sensory/inter/motor neurons.

It localises to the nucleus. Transcription factor that binds to the promoter of target genes. Regulates genes involved in serotonin synthesis and release in serotonergic ADF neurons. Involved in specification of neuron cell fate, olfactory receptor expression, locomotion, and foraging behavior. Required in AWB olfactory neurons to repress AWC cell fate and promote the AWB cell fate during early development. Cooperates with additional factors to direct the differentiation of the olfactory neurons, functioning with the transcription factor sox-2 to suppress AWC terminal differentiation and promote AWB neuron differentiation. Involved in regulating terminal specification and maintenance of the SMB sensory/inter/motor neurons. Plays a role in regulation of RID motor neuron differentiation, but is dispensable for motor axon outgrowth in the dorsal nerve cord. May regulate its own expression. This is LIM/homeobox protein lim-4 from Caenorhabditis elegans.